Reading from the N-terminus, the 330-residue chain is Probable inactive heme oxygenase 2, chloroplastic (330 aa).

Low complexity-rich tracts occupy residues 1 to 13 and 56 to 69; these read MPLAAAVAASAVV and AAEAEAEAVAVDEA. Disordered stretches follow at residues 1–27, 50–82, and 107–156; these read MPLAAAVAASAVVPPRPPPPPPRRARP, PSPPAPAAEAEAEAVAVDEAPPAKPRPRRYPRQ, and TTLK…LEGE. The transit peptide at 1–47 directs the protein to the chloroplast; the sequence is MPLAAAVAASAVVPPRPPPPPPRRARPLRSFTGLILTRDLAALTVAR. The segment covering 114 to 151 has biased composition (acidic residues); that stretch reads TGAEEEVGDGVSEDASASEEEEEEEDDDDVVEEEEEGA.

Belongs to the heme oxygenase family.

Its subcellular location is the plastid. It is found in the chloroplast. Probable inactive heme oxygenase that may play a role in the regulation of phytochrome assembly and photomorphogenesis. This Oryza sativa subsp. japonica (Rice) protein is Probable inactive heme oxygenase 2, chloroplastic (HO2).